Here is a 349-residue protein sequence, read N- to C-terminus: 4-hydroxy-3-methylbut-2-en-1-yl diphosphate synthase (flavodoxin) (349 aa).

[4Fe-4S] cluster contacts are provided by C264, C267, C299, and E306.

The protein belongs to the IspG family. It depends on [4Fe-4S] cluster as a cofactor.

The catalysed reaction is (2E)-4-hydroxy-3-methylbut-2-enyl diphosphate + oxidized [flavodoxin] + H2O + 2 H(+) = 2-C-methyl-D-erythritol 2,4-cyclic diphosphate + reduced [flavodoxin]. The protein operates within isoprenoid biosynthesis; isopentenyl diphosphate biosynthesis via DXP pathway; isopentenyl diphosphate from 1-deoxy-D-xylulose 5-phosphate: step 5/6. Converts 2C-methyl-D-erythritol 2,4-cyclodiphosphate (ME-2,4cPP) into 1-hydroxy-2-methyl-2-(E)-butenyl 4-diphosphate. This chain is 4-hydroxy-3-methylbut-2-en-1-yl diphosphate synthase (flavodoxin), found in Clostridium acetobutylicum (strain ATCC 824 / DSM 792 / JCM 1419 / IAM 19013 / LMG 5710 / NBRC 13948 / NRRL B-527 / VKM B-1787 / 2291 / W).